We begin with the raw amino-acid sequence, 333 residues long: Fructose-1,6-bisphosphatase class 1 (333 aa).

Mg(2+)-binding residues include glutamate 90, aspartate 112, leucine 114, and aspartate 115. Residues 115-118 (DGSS), asparagine 207, and lysine 273 contribute to the substrate site. Glutamate 279 lines the Mg(2+) pocket.

It belongs to the FBPase class 1 family. As to quaternary structure, homotetramer. The cofactor is Mg(2+).

It localises to the cytoplasm. It carries out the reaction beta-D-fructose 1,6-bisphosphate + H2O = beta-D-fructose 6-phosphate + phosphate. The protein operates within carbohydrate biosynthesis; gluconeogenesis. The protein is Fructose-1,6-bisphosphatase class 1 of Azoarcus sp. (strain BH72).